The primary structure comprises 1678 residues: Nuclear pore complex protein Nup98-Nup96 (1678 aa).

Residues 1–11 (MFGQNKSFGSS) show a composition bias toward low complexity. 5 disordered regions span residues 1–41 (MFGQ…QPAN), 68–100 (SSIFGSPQQPQNNQSSLFGGGQNNANRSIFGST), 301–366 (TTGS…GAPA), 441–473 (FGNTTNTGTGGGLFGSQPQASSGGLFGSNTQAT), and 603–631 (SKEAPPSLARGLRNSTFNPNMSLTNRSVH). The segment covering 12–22 (SFGGGSSGSGL) has biased composition (gly residues). 2 stretches are compositionally biased toward low complexity: residues 23-38 (FGQNNQNNQNKGLFGQ) and 73-83 (SPQQPQNNQSS). Residues 306-329 (LFGNQQPQTNTGGSLFGNTQNQNQ) show a composition bias toward polar residues. Low complexity predominate over residues 345–366 (FGQAQQQPQQQSSGFSFGGAPA). Polar residues-rich tracts occupy residues 456–473 (SQPQASSGGLFGSNTQAT) and 615–628 (RNSTFNPNMSLTNR). A Peptidase S59 domain is found at 777–919 (KPDYFSLPTI…GSWVFRVDHF (143 aa)). The Nucleophile role is filled by serine 920.

Belongs to the nucleoporin GLFG family. As to quaternary structure, part of the NPC. The Nup98 and Nup96 chains are autoproteolytically processed from a single precursor protein.

It localises to the cytoplasmic granule. The protein resides in the nucleus membrane. Its subcellular location is the nucleus. The protein localises to the nuclear pore complex. It is found in the nucleus envelope. It localises to the chromosome. In terms of biological role, nup98 and Nup96 play a role in the bidirectional transport across the nucleoporin complex (NPC). Required for the nuclear import of hcp-4 during mitotic prophase, this step is essential for centrosome assembly and resolution. Regulates nucleoporin npp-5 localization to the nuclear membrane during interphase and to kinetochores during metaphase. Has a role in P granule integrity; may promote the 'liquid phase' of P granules by increasing the number of interacting RNA-protein complexes. Binds nos-2 mRNA, probably indirectly, and promotes its accumulation in P granules. The chain is Nuclear pore complex protein Nup98-Nup96 from Caenorhabditis elegans.